A 768-amino-acid chain; its full sequence is Disabled homolog 2 (768 aa).

Polar residues predominate over residues 1–16 (MSNEVETSTTNGQPDQ). The tract at residues 1–36 (MSNEVETSTTNGQPDQQAAPKAPSKKEKKKGSEKTD) is disordered. S2 carries the post-translational modification N-acetylserine. S2 carries the post-translational modification Phosphoserine. A PID domain is found at 45–196 (GDGVKYKAKL…KAEENGSEAL (152 aa)). At Y170 the chain carries Phosphotyrosine. At S193 the chain carries Phosphoserine. The tract at residues 230-447 (ESRDILLVDL…KPGRGRRTAK (218 aa)) is required for localization to clathrin-coated pits. The interval 285-449 (NFFPTPNPDP…GRGRRTAKSS (165 aa)) is disordered. Short sequence motifs (DPF) lie at residues 293–295 (DPF) and 298–300 (DPF). Composition is skewed to polar residues over residues 303–317 (PDQS…LTSA), 325–334 (GSLSTPQSKG), and 367–381 (PSSQ…QNGV). S326 and S328 each carry phosphoserine; in mitosis. At S401 the chain carries Phosphoserine. A sufficient for interaction with GRB2 region spans residues 601 to 731 (TISTQSFPQP…GVLSGTKSAD (131 aa)). Positions 619–627 (PPQPPPRNG) are required for interaction with CSK. The required for interaction with MYO6 stretch occupies residues 649–768 (KEVKEMFKDF…HRSPFGNPFA (120 aa)). Disordered regions lie at residues 660–682 (LRQP…SSAF) and 709–768 (NKIN…NPFA). Residues 663–671 (PPLVPSRKG) form a required for interaction with GRB2 and CSK region. A Phosphothreonine modification is found at T673. S675 is subject to Phosphoserine. Residues 708–724 (LNKINEPPKPAPRQGVL) form a sufficient for interaction with SH3KBP1 SH3 domain region. Residues 724–755 (LSGTKSADNSLENPFSKGFSSTNPSVVSQPAS) show a composition bias toward polar residues. A phosphoserine mark is found at S729 and S761.

Can interact (via PID domain) with LDLR, APP, APLP1 and APLP2, and weakly with INPP5D (via NPXY motifs); the interaction is impaired by tyrosine phosphorylation of the respective NPXY motifs. Can weakly interact (via PID domain) with LRP1 (via NPXY motif); the interaction is enhanced by tyrosine phosphorylation of the NPXY motif. Interacts with LRP2 (via NPXY motif); the interaction is not affected by tyrosine phosphorylation of the NPXY motif. Interacts with clathrin; in vitro can assemble clathrin triskelia into polyhedral coats. Interacts with AP2A2, ITGB1, ITGB3, ITGB5, PIAS2, DAB2IP, NOSTRIN, FCHO1, DVL3, EPS15, ITSN1 and EPS15L1. Interacts with SH3KBP1 (via SH3 domains). Interacts with GRB2; competes with SOS1 for binding to GRB2 and the interaction is enhanced by EGF and NT-3 stimulation. Interacts with MAP3K7; the interaction is induced by TGF-beta stimulation and may mediate TGF-beta stimulated JNK activation. Interacts with AXIN1 and PPP1CA; the interactions are mutually exclusive. Interacts with the globular tail of MYO6. Interacts (via DPF motifs) with FCHO2; the interaction is direct and required for DAB2-mediated LDLR endocytosis. Interacts with LRP6; the interaction involves LRP6 phosphorylation by CK2 and sequesters LRP6 towards clathrin-mediated endocytosis. Associates with the TGF-beta receptor complex. Interacts with SMAD2 and SMAD3; the interactions are enhanced upon TGF-beta stimulation. Interacts with GRB2; the interaction is enhanced by EGF and NT-3 stimulation. Interacts with SRC; the interaction is enhanced by EGF stimulation. Interacts with GRB2; the interaction is enhanced by EGF and NT-3 stimulation. Interacts (via NPXY motif) with DAB2 (via PID domain). Phosphorylated. Phosphorylation during mitosis is leading to membrane displacement. There is some ambiguity for the mitotic phosphosite Ser-326/328. In terms of tissue distribution, prostate.

The protein localises to the cytoplasm. It localises to the cytoplasmic vesicle. Its subcellular location is the clathrin-coated vesicle membrane. It is found in the membrane. The protein resides in the clathrin-coated pit. In terms of biological role, adapter protein that functions as a clathrin-associated sorting protein (CLASP) required for clathrin-mediated endocytosis of selected cargo proteins. Can bind and assemble clathrin, and binds simultaneously to phosphatidylinositol 4,5-bisphosphate (PtdIns(4,5)P2) and cargos containing non-phosphorylated NPXY internalization motifs, such as the LDL receptor, to recruit them to clathrin-coated pits. Can function in clathrin-mediated endocytosis independently of the AP-2 complex. Involved in endocytosis of integrin beta-1; this function seems to redundant with the AP-2 complex and seems to require DAB2 binding to endocytosis accessory EH domain-containing proteins such as EPS15, EPS15L1 and ITSN1. Involved in endocytosis of cystic fibrosis transmembrane conductance regulator/CFTR. Involved in endocytosis of megalin/LRP2 lipoprotein receptor during embryonal development. Required for recycling of the TGF-beta receptor. Involved in CFTR trafficking to the late endosome. Involved in several receptor-mediated signaling pathways. Involved in TGF-beta receptor signaling and facilitates phosphorylation of the signal transducer SMAD2. Mediates TFG-beta-stimulated JNK activation. May inhibit the canoniocal Wnt/beta-catenin signaling pathway by stabilizing the beta-catenin destruction complex through a competing association with axin preventing its dephosphorylation through protein phosphatase 1 (PP1). Sequesters LRP6 towards clathrin-mediated endocytosis, leading to inhibition of Wnt/beta-catenin signaling. May activate non-canonical Wnt signaling. In cell surface growth factor/Ras signaling pathways proposed to inhibit ERK activation by interrupting the binding of GRB2 to SOS1 and to inhibit SRC by preventing its activating phosphorylation at 'Tyr-419'. Proposed to be involved in modulation of androgen receptor (AR) signaling mediated by SRC activation; seems to compete with AR for interaction with SRC. Plays a role in the CSF-1 signal transduction pathway. Plays a role in cellular differentiation. Involved in cell positioning and formation of visceral endoderm (VE) during embryogenesis and proposed to be required in the VE to respond to Nodal signaling coming from the epiblast. Required for the epithelial to mesenchymal transition, a process necessary for proper embryonic development. May be involved in myeloid cell differentiation and can induce macrophage adhesion and spreading. May act as a tumor suppressor. This Rattus norvegicus (Rat) protein is Disabled homolog 2 (Dab2).